The sequence spans 130 residues: Small ribosomal subunit protein uS9 (130 aa).

Residues 98–130 (LKKAGMLTRDPRMKERKKYGLKKARKASQFSKR) are disordered. Basic residues predominate over residues 111–130 (KERKKYGLKKARKASQFSKR).

The protein belongs to the universal ribosomal protein uS9 family.

The protein is Small ribosomal subunit protein uS9 of Lacticaseibacillus casei (strain BL23) (Lactobacillus casei).